The following is a 79-amino-acid chain: Sec-independent protein translocase protein TatA (79 aa).

Residues 1 to 21 traverse the membrane as a helical segment; the sequence is MGGISIWQLLIIALIVILLFG. The tract at residues 42–79 is disordered; sequence AMTSETSEEEKKALEDSQTAQTSQQAEKKPESKDKEQA. Residues 57 to 66 are compositionally biased toward polar residues; the sequence is DSQTAQTSQQ. Residues 67–79 show a composition bias toward basic and acidic residues; that stretch reads AEKKPESKDKEQA.

It belongs to the TatA/E family. The Tat system comprises two distinct complexes: a TatABC complex, containing multiple copies of TatA, TatB and TatC subunits, and a separate TatA complex, containing only TatA subunits. Substrates initially bind to the TatABC complex, which probably triggers association of the separate TatA complex to form the active translocon.

The protein resides in the cell inner membrane. In terms of biological role, part of the twin-arginine translocation (Tat) system that transports large folded proteins containing a characteristic twin-arginine motif in their signal peptide across membranes. TatA could form the protein-conducting channel of the Tat system. This chain is Sec-independent protein translocase protein TatA, found in Shewanella denitrificans (strain OS217 / ATCC BAA-1090 / DSM 15013).